The sequence spans 37 residues: MKVSPSVKRICENCRVIRRHGRVMVICVNPRHKQRQG.

This sequence belongs to the bacterial ribosomal protein bL36 family.

The polypeptide is Large ribosomal subunit protein bL36 (Bifidobacterium adolescentis (strain ATCC 15703 / DSM 20083 / NCTC 11814 / E194a)).